The chain runs to 235 residues: Centromere protein H (235 aa).

The tract at residues 1–23 (MAGRLSESVGSGPGAEAETAADP) is disordered. Residues 125-145 (EIIQAHQQARVIRENLNDIRR) are a coiled coil.

The protein belongs to the CENP-H/MCM16 family. As to quaternary structure, component of the CENPA-HI complex, at least composed of CENPH, CENPI, CENPK, CENPL, CENPM, CENPO and CENPP. Interacts with NDC80.

Its subcellular location is the nucleus. The protein localises to the chromosome. It localises to the centromere. It is found in the kinetochore. Its function is as follows. Component of the CENPA-HI complex, a centromeric complex involved in assembly of kinetochore proteins, mitotic progression and chromosome segregation. Required for the localization of CENPC but not CENPA to the centromere. It however may be involved in incorporation of newly synthesized CENPA into centromeres via its interaction with the CENPA-NAC complex. This chain is Centromere protein H (CENPH), found in Gallus gallus (Chicken).